We begin with the raw amino-acid sequence, 89 residues long: Small ribosomal subunit protein uS15 (89 aa).

The protein belongs to the universal ribosomal protein uS15 family. As to quaternary structure, part of the 30S ribosomal subunit. Forms a bridge to the 50S subunit in the 70S ribosome, contacting the 23S rRNA.

Functionally, one of the primary rRNA binding proteins, it binds directly to 16S rRNA where it helps nucleate assembly of the platform of the 30S subunit by binding and bridging several RNA helices of the 16S rRNA. Its function is as follows. Forms an intersubunit bridge (bridge B4) with the 23S rRNA of the 50S subunit in the ribosome. In Chlorobium luteolum (strain DSM 273 / BCRC 81028 / 2530) (Pelodictyon luteolum), this protein is Small ribosomal subunit protein uS15.